A 456-amino-acid chain; its full sequence is Chromosomal replication initiator protein DnaA (456 aa).

The interval 1–79 is domain I, interacts with DnaA modulators; sequence MSQEIWADVL…QHPQVSFQVL (79 aa). Residues 79 to 112 form a domain II region; sequence LPASQDALLLPSDPPPAPISPGRAPAPPPADNRK. Positions 89 to 112 are disordered; sequence PSDPPPAPISPGRAPAPPPADNRK. The span at 90-108 shows a compositional bias: pro residues; the sequence is SDPPPAPISPGRAPAPPPA. Residues 113-329 are domain III, AAA+ region; that stretch reads TLNPKYTFEN…GALMRVVAFS (217 aa). ATP is bound by residues Gly-157, Gly-159, Lys-160, and Thr-161. Positions 330–456 are domain IV, binds dsDNA; it reads SLNNVPFSRA…KGLEDEDSRA (127 aa).

This sequence belongs to the DnaA family. In terms of assembly, oligomerizes as a right-handed, spiral filament on DNA at oriC.

The protein localises to the cytoplasm. Functionally, plays an essential role in the initiation and regulation of chromosomal replication. ATP-DnaA binds to the origin of replication (oriC) to initiate formation of the DNA replication initiation complex once per cell cycle. Binds the DnaA box (a 9 base pair repeat at the origin) and separates the double-stranded (ds)DNA. Forms a right-handed helical filament on oriC DNA; dsDNA binds to the exterior of the filament while single-stranded (ss)DNA is stabiized in the filament's interior. The ATP-DnaA-oriC complex binds and stabilizes one strand of the AT-rich DNA unwinding element (DUE), permitting loading of DNA polymerase. After initiation quickly degrades to an ADP-DnaA complex that is not apt for DNA replication. Binds acidic phospholipids. The chain is Chromosomal replication initiator protein DnaA from Deinococcus deserti (strain DSM 17065 / CIP 109153 / LMG 22923 / VCD115).